We begin with the raw amino-acid sequence, 254 residues long: Ubiquinone/menaquinone biosynthesis C-methyltransferase UbiE (254 aa).

S-adenosyl-L-methionine contacts are provided by residues Thr77, Asp98, 126 to 127 (NA), and Ser143.

Belongs to the class I-like SAM-binding methyltransferase superfamily. MenG/UbiE family.

It catalyses the reaction a 2-demethylmenaquinol + S-adenosyl-L-methionine = a menaquinol + S-adenosyl-L-homocysteine + H(+). The enzyme catalyses a 2-methoxy-6-(all-trans-polyprenyl)benzene-1,4-diol + S-adenosyl-L-methionine = a 5-methoxy-2-methyl-3-(all-trans-polyprenyl)benzene-1,4-diol + S-adenosyl-L-homocysteine + H(+). Its pathway is quinol/quinone metabolism; menaquinone biosynthesis; menaquinol from 1,4-dihydroxy-2-naphthoate: step 2/2. It functions in the pathway cofactor biosynthesis; ubiquinone biosynthesis. Functionally, methyltransferase required for the conversion of demethylmenaquinol (DMKH2) to menaquinol (MKH2) and the conversion of 2-polyprenyl-6-methoxy-1,4-benzoquinol (DDMQH2) to 2-polyprenyl-3-methyl-6-methoxy-1,4-benzoquinol (DMQH2). This is Ubiquinone/menaquinone biosynthesis C-methyltransferase UbiE from Blochmanniella floridana.